Reading from the N-terminus, the 151-residue chain is Aspartate carbamoyltransferase regulatory chain (151 aa).

Positions 108, 113, 138, and 141 each coordinate Zn(2+).

Belongs to the PyrI family. As to quaternary structure, contains catalytic and regulatory chains. Zn(2+) is required as a cofactor.

Its function is as follows. Involved in allosteric regulation of aspartate carbamoyltransferase. The sequence is that of Aspartate carbamoyltransferase regulatory chain from Pyrobaculum islandicum (strain DSM 4184 / JCM 9189 / GEO3).